The following is a 577-amino-acid chain: Efflux pump notK' (577 aa).

2 N-linked (GlcNAc...) asparagine glycosylation sites follow: asparagine 62 and asparagine 84. 5 helical membrane-spanning segments follow: residues alanine 104–leucine 124, leucine 151–isoleucine 171, alanine 189–valine 209, asparagine 241–tyrosine 261, and glycine 265–valine 285. A glycan (N-linked (GlcNAc...) asparagine) is linked at asparagine 320. Transmembrane regions (helical) follow at residues phenylalanine 328–tyrosine 348, valine 373–valine 393, glycine 413–alanine 433, threonine 434–tryptophan 454, and isoleucine 476–valine 496. Residues methionine 555–proline 566 are compositionally biased toward low complexity. The disordered stretch occupies residues methionine 555–tyrosine 577. Asparagine 558 carries N-linked (GlcNAc...) asparagine glycosylation.

It belongs to the nucleobase:cation symporter-2 (NCS2) (TC 2.A.40) family. Azg-like subfamily.

The protein localises to the cell membrane. In terms of biological role, efflux pump; part of the gene cluster that mediates the biosynthesis of notoamide, a fungal indole alkaloid that belongs to a family of natural products containing a characteristic bicyclo[2.2.2]diazaoctane core. The protein is Efflux pump notK' of Aspergillus versicolor.